We begin with the raw amino-acid sequence, 703 residues long: Polyribonucleotide nucleotidyltransferase (703 aa).

D486 and D492 together coordinate Mg(2+). One can recognise a KH domain in the interval 553–612 (PKIEIIHINPDKIRDVIGPGGKKINEIIDATGVKLDIEQDGTVFIGSSDASMIEAAKKLI). The 69-residue stretch at 622 to 690 (GQIYMATVKR…KQGRVNASRK (69 aa)) folds into the S1 motif domain.

This sequence belongs to the polyribonucleotide nucleotidyltransferase family. It depends on Mg(2+) as a cofactor.

Its subcellular location is the cytoplasm. It carries out the reaction RNA(n+1) + phosphate = RNA(n) + a ribonucleoside 5'-diphosphate. Involved in mRNA degradation. Catalyzes the phosphorolysis of single-stranded polyribonucleotides processively in the 3'- to 5'-direction. In Macrococcus caseolyticus (strain JCSC5402) (Macrococcoides caseolyticum), this protein is Polyribonucleotide nucleotidyltransferase.